The primary structure comprises 103 residues: Large ribosomal subunit protein bL21 (103 aa).

This sequence belongs to the bacterial ribosomal protein bL21 family. In terms of assembly, part of the 50S ribosomal subunit. Contacts protein L20.

Functionally, this protein binds to 23S rRNA in the presence of protein L20. In Acinetobacter baylyi (strain ATCC 33305 / BD413 / ADP1), this protein is Large ribosomal subunit protein bL21.